The sequence spans 228 residues: Thermonuclease (228 aa).

Positions 1–23 (MTEYLLSAGICMAIVSILLIGMA) are cleaved as a signal peptide. Residues 24-60 (ISNVSKEQYAKRFFFFATSCLVLTLVVASSLSSSANA) constitute a propeptide that is removed on maturation. Asp100 contributes to the Ca(2+) binding site. Residue Arg114 is part of the active site. Asp119 and Thr120 together coordinate Ca(2+). Catalysis depends on residues Glu122 and Arg166.

It belongs to the thermonuclease family. It depends on Ca(2+) as a cofactor.

Its subcellular location is the secreted. The catalysed reaction is Endonucleolytic cleavage to nucleoside 3'-phosphates and 3'-phosphooligonucleotide end-products.. Its function is as follows. Enzyme that catalyzes the hydrolysis of both DNA and RNA at the 5' position of the phosphodiester bond. The polypeptide is Thermonuclease (nuc) (Staphylococcus aureus (strain MRSA252)).